The primary structure comprises 170 residues: Lipoprotein signal peptidase (170 aa).

3 consecutive transmembrane segments (helical) span residues 9–29, 72–92, and 95–117; these read FNIFVFVISLIFFDQLSKYLV, IFFIAMPIFILIFVFSLALKE, and CITRISLLLIFSGGVGNIIDRLF. Residues Asp-124 and Asp-146 contribute to the active site. The helical transmembrane segment at 143-163 threads the bilayer; the sequence is NFADSYVVIGMILFLVYDFFI.

Belongs to the peptidase A8 family.

Its subcellular location is the cell inner membrane. It carries out the reaction Release of signal peptides from bacterial membrane prolipoproteins. Hydrolyzes -Xaa-Yaa-Zaa-|-(S,diacylglyceryl)Cys-, in which Xaa is hydrophobic (preferably Leu), and Yaa (Ala or Ser) and Zaa (Gly or Ala) have small, neutral side chains.. It functions in the pathway protein modification; lipoprotein biosynthesis (signal peptide cleavage). Functionally, this protein specifically catalyzes the removal of signal peptides from prolipoproteins. This chain is Lipoprotein signal peptidase, found in Borrelia garinii subsp. bavariensis (strain ATCC BAA-2496 / DSM 23469 / PBi) (Borreliella bavariensis).